The sequence spans 73 residues: Translation initiation factor IF-1 (73 aa).

One can recognise an S1-like domain in the interval 1–73; the sequence is MDIKEEAIET…TKGRIVYREK (73 aa).

The protein belongs to the IF-1 family. Component of the 30S ribosomal translation pre-initiation complex which assembles on the 30S ribosome in the order IF-2 and IF-3, IF-1 and N-formylmethionyl-tRNA(fMet); mRNA recruitment can occur at any time during PIC assembly.

It is found in the cytoplasm. Its function is as follows. One of the essential components for the initiation of protein synthesis. Stabilizes the binding of IF-2 and IF-3 on the 30S subunit to which N-formylmethionyl-tRNA(fMet) subsequently binds. Helps modulate mRNA selection, yielding the 30S pre-initiation complex (PIC). Upon addition of the 50S ribosomal subunit IF-1, IF-2 and IF-3 are released leaving the mature 70S translation initiation complex. This chain is Translation initiation factor IF-1, found in Borreliella afzelii (strain PKo) (Borrelia afzelii).